Consider the following 98-residue polypeptide: DNA-binding protein Fis (98 aa).

A DNA-binding region (H-T-H motif) is located at residues Gln74 to Lys93.

The protein belongs to the transcriptional regulatory Fis family. As to quaternary structure, homodimer.

Functionally, activates ribosomal RNA transcription. Plays a direct role in upstream activation of rRNA promoters. This Vibrio parahaemolyticus serotype O3:K6 (strain RIMD 2210633) protein is DNA-binding protein Fis.